The sequence spans 344 residues: Phenylalanine--tRNA ligase alpha subunit (344 aa).

Glu256 is a Mg(2+) binding site.

It belongs to the class-II aminoacyl-tRNA synthetase family. Phe-tRNA synthetase alpha subunit type 1 subfamily. As to quaternary structure, tetramer of two alpha and two beta subunits. Mg(2+) is required as a cofactor.

The protein resides in the cytoplasm. It catalyses the reaction tRNA(Phe) + L-phenylalanine + ATP = L-phenylalanyl-tRNA(Phe) + AMP + diphosphate + H(+). The sequence is that of Phenylalanine--tRNA ligase alpha subunit from Bacillus licheniformis (strain ATCC 14580 / DSM 13 / JCM 2505 / CCUG 7422 / NBRC 12200 / NCIMB 9375 / NCTC 10341 / NRRL NRS-1264 / Gibson 46).